A 521-amino-acid chain; its full sequence is Glutamate--cysteine ligase (521 aa).

The protein belongs to the glutamate--cysteine ligase type 1 family. Type 1 subfamily.

It carries out the reaction L-cysteine + L-glutamate + ATP = gamma-L-glutamyl-L-cysteine + ADP + phosphate + H(+). It functions in the pathway sulfur metabolism; glutathione biosynthesis; glutathione from L-cysteine and L-glutamate: step 1/2. The protein is Glutamate--cysteine ligase of Aliivibrio salmonicida (strain LFI1238) (Vibrio salmonicida (strain LFI1238)).